The chain runs to 156 residues: Transcriptional repressor NrdR (156 aa).

A zinc finger lies at 3–34; the sequence is CPFCGSMDTRVLDSRPTLDGTAIRRRRECSSC. The region spanning 49 to 139 is the ATP-cone domain; it reads VLVVKKDGRR…VYRDFREVDQ (91 aa).

Belongs to the NrdR family. It depends on Zn(2+) as a cofactor.

Its function is as follows. Negatively regulates transcription of bacterial ribonucleotide reductase nrd genes and operons by binding to NrdR-boxes. The chain is Transcriptional repressor NrdR from Thermotoga maritima (strain ATCC 43589 / DSM 3109 / JCM 10099 / NBRC 100826 / MSB8).